A 75-amino-acid chain; its full sequence is Small ribosomal subunit protein bS18 (75 aa).

The protein belongs to the bacterial ribosomal protein bS18 family. In terms of assembly, part of the 30S ribosomal subunit. Forms a tight heterodimer with protein bS6.

In terms of biological role, binds as a heterodimer with protein bS6 to the central domain of the 16S rRNA, where it helps stabilize the platform of the 30S subunit. In Teredinibacter turnerae (strain ATCC 39867 / T7901), this protein is Small ribosomal subunit protein bS18.